Consider the following 147-residue polypeptide: Hemoglobin subunit beta-M (147 aa).

An N-acetylvaline modification is found at Val2. Positions 3–147 (HLTSEEKNCI…VAHALAHKYH (145 aa)) constitute a Globin domain. Thr13 carries the phosphothreonine modification. Ser45 is modified (phosphoserine). Lys60 is subject to N6-acetyllysine. His64 serves as a coordination point for heme b. N6-acetyllysine is present on Lys83. His93 contacts heme b. At Cys94 the chain carries S-nitrosocysteine. Position 145 is an N6-acetyllysine (Lys145).

It belongs to the globin family. In terms of assembly, heterotetramer of two alpha chains and two beta chains. In terms of tissue distribution, red blood cells.

Involved in oxygen transport from the lung to the various peripheral tissues. The chain is Hemoglobin subunit beta-M (HBB) from Didelphis virginiana (North American opossum).